A 327-amino-acid chain; its full sequence is MPHLAELVAKAKAAVEGAQDIAALDLVRVEYLGKKGHLTLQMTSLRELPAEERPAAGAVINQAKQEVQEALNARKEKLESAVLNARLAAETIDVSLPGRRMENGGLHPVTRTIERIETFFGELGFSVESGPEIEDDYHNFDALNIPAHHPARADHDTFWFDATRLLRTQTSGVQIRTMQEQQPPIRIIVPGRVYRNDYDQTHTPMFHQMEGLIVDRDISFTNLKGTLHDFLRNFFEEDLQIRFRPSYFPFTEPSAEVDVMGKNGKWLEVLGCGMVHPNVLRNVGIDPEIYSGFAFGMGMERLTMLRYGVTDLRAFFENDLRFLKQFK.

Glu252 contacts Mg(2+).

This sequence belongs to the class-II aminoacyl-tRNA synthetase family. Phe-tRNA synthetase alpha subunit type 1 subfamily. As to quaternary structure, tetramer of two alpha and two beta subunits. The cofactor is Mg(2+).

It is found in the cytoplasm. It carries out the reaction tRNA(Phe) + L-phenylalanine + ATP = L-phenylalanyl-tRNA(Phe) + AMP + diphosphate + H(+). The sequence is that of Phenylalanine--tRNA ligase alpha subunit from Yersinia pestis bv. Antiqua (strain Angola).